A 103-amino-acid chain; its full sequence is Small ribosomal subunit protein uS10 (103 aa).

This sequence belongs to the universal ribosomal protein uS10 family. In terms of assembly, part of the 30S ribosomal subunit.

Its function is as follows. Involved in the binding of tRNA to the ribosomes. This is Small ribosomal subunit protein uS10 from Picrophilus torridus (strain ATCC 700027 / DSM 9790 / JCM 10055 / NBRC 100828 / KAW 2/3).